The chain runs to 141 residues: MAIERTLSIIKPDAVAKNVIGKIYDRFESAGLKIVASKMAHLSQNEAEQFYGVHKDRPFFKDLVSFMISGPVMIQVLQGEGAIAKNRDLMGATDPKKAEKGTIRADFADSIDANAVHGSDAPETAAVEVAFFFPGMNVFNR.

The ATP site is built by Lys-11, Phe-59, Arg-87, Thr-93, Arg-104, and Asn-114. The active-site Pros-phosphohistidine intermediate is the His-117.

It belongs to the NDK family. As to quaternary structure, homotetramer. The cofactor is Mg(2+).

It is found in the cytoplasm. It catalyses the reaction a 2'-deoxyribonucleoside 5'-diphosphate + ATP = a 2'-deoxyribonucleoside 5'-triphosphate + ADP. The enzyme catalyses a ribonucleoside 5'-diphosphate + ATP = a ribonucleoside 5'-triphosphate + ADP. Its function is as follows. Major role in the synthesis of nucleoside triphosphates other than ATP. The ATP gamma phosphate is transferred to the NDP beta phosphate via a ping-pong mechanism, using a phosphorylated active-site intermediate. In Polynucleobacter necessarius subsp. necessarius (strain STIR1), this protein is Nucleoside diphosphate kinase.